The primary structure comprises 545 residues: O-phosphoserine--tRNA(Cys) ligase (545 aa).

Substrate-binding positions include 189–191, 234–236, 276–277, and asparagine 328; these read HMT, SAS, and YY.

The protein belongs to the class-II aminoacyl-tRNA synthetase family. O-phosphoseryl-tRNA(Cys) synthetase subfamily. In terms of assembly, homotetramer. Interacts with SepCysS.

The enzyme catalyses tRNA(Cys) + O-phospho-L-serine + ATP = O-phospho-L-seryl-tRNA(Cys) + AMP + diphosphate. Its function is as follows. Catalyzes the attachment of O-phosphoserine (Sep) to tRNA(Cys). The polypeptide is O-phosphoserine--tRNA(Cys) ligase (Methanothrix thermoacetophila (strain DSM 6194 / JCM 14653 / NBRC 101360 / PT) (Methanosaeta thermophila)).